The chain runs to 454 residues: UDP-N-acetylmuramoylalanine--D-glutamate ligase (454 aa).

Residue 114-120 (GTNGKTT) coordinates ATP.

Belongs to the MurCDEF family.

The protein localises to the cytoplasm. It carries out the reaction UDP-N-acetyl-alpha-D-muramoyl-L-alanine + D-glutamate + ATP = UDP-N-acetyl-alpha-D-muramoyl-L-alanyl-D-glutamate + ADP + phosphate + H(+). Its pathway is cell wall biogenesis; peptidoglycan biosynthesis. Functionally, cell wall formation. Catalyzes the addition of glutamate to the nucleotide precursor UDP-N-acetylmuramoyl-L-alanine (UMA). This is UDP-N-acetylmuramoylalanine--D-glutamate ligase from Desulfitobacterium hafniense (strain DSM 10664 / DCB-2).